We begin with the raw amino-acid sequence, 219 residues long: Probable octanoyltransferase (219 aa).

In terms of domain architecture, BPL/LPL catalytic spans 43-219 (QPPKPTIITS…NNLDSFLMSK (177 aa)). Substrate is bound by residues 83-90 (RGGQTTFH), 151-153 (AIG), and 164-166 (GLA). Residue Cys-182 is the Acyl-thioester intermediate of the active site.

The protein belongs to the LipB family.

The catalysed reaction is octanoyl-[ACP] + L-lysyl-[protein] = N(6)-octanoyl-L-lysyl-[protein] + holo-[ACP] + H(+). It participates in protein modification; protein lipoylation via endogenous pathway; protein N(6)-(lipoyl)lysine from octanoyl-[acyl-carrier-protein]: step 1/2. Functionally, catalyzes the transfer of endogenously produced octanoic acid from octanoyl-acyl-carrier-protein onto the lipoyl domains of lipoate-dependent enzymes. Lipoyl-ACP can also act as a substrate although octanoyl-ACP is likely to be the physiological substrate. The chain is Probable octanoyltransferase from Schizosaccharomyces pombe (strain 972 / ATCC 24843) (Fission yeast).